The chain runs to 103 residues: Large ribosomal subunit protein bL21 (103 aa).

The protein belongs to the bacterial ribosomal protein bL21 family. As to quaternary structure, part of the 50S ribosomal subunit. Contacts protein L20.

Functionally, this protein binds to 23S rRNA in the presence of protein L20. The protein is Large ribosomal subunit protein bL21 of Rhodococcus jostii (strain RHA1).